Here is a 142-residue protein sequence, read N- to C-terminus: Putative transcriptional regulatory protein Mevan_1098 (142 aa).

The protein belongs to the Tfx family.

Putative transcriptional regulator. The protein is Putative transcriptional regulatory protein Mevan_1098 of Methanococcus vannielii (strain ATCC 35089 / DSM 1224 / JCM 13029 / OCM 148 / SB).